Reading from the N-terminus, the 642-residue chain is Threonine--tRNA ligase (642 aa).

The TGS domain occupies 1-61 (MPVIRFYDGS…REDAFIEFVD (61 aa)). The catalytic stretch occupies residues 243–534 (DHRKIGKFLQ…LIEECSGNLP (292 aa)). Residues cysteine 334, histidine 385, and histidine 511 each coordinate Zn(2+).

Belongs to the class-II aminoacyl-tRNA synthetase family. Homodimer. Zn(2+) is required as a cofactor.

The protein localises to the cytoplasm. It catalyses the reaction tRNA(Thr) + L-threonine + ATP = L-threonyl-tRNA(Thr) + AMP + diphosphate + H(+). Functionally, catalyzes the attachment of threonine to tRNA(Thr) in a two-step reaction: L-threonine is first activated by ATP to form Thr-AMP and then transferred to the acceptor end of tRNA(Thr). Also edits incorrectly charged L-seryl-tRNA(Thr). The sequence is that of Threonine--tRNA ligase from Buchnera aphidicola subsp. Acyrthosiphon pisum (strain Tuc7).